Reading from the N-terminus, the 410-residue chain is Argininosuccinate synthase (410 aa).

6-14 (AYSGGLDTS) is a binding site for ATP. Tyr84 is a binding site for L-citrulline. Position 114 (Gly114) interacts with ATP. Residues Thr116, Asn120, and Asp121 each coordinate L-aspartate. L-citrulline is bound at residue Asn120. The L-citrulline site is built by Arg124, Ser169, Ser178, Glu254, and Tyr266.

This sequence belongs to the argininosuccinate synthase family. Type 1 subfamily. Homotetramer.

The protein localises to the cytoplasm. The catalysed reaction is L-citrulline + L-aspartate + ATP = 2-(N(omega)-L-arginino)succinate + AMP + diphosphate + H(+). Its pathway is amino-acid biosynthesis; L-arginine biosynthesis; L-arginine from L-ornithine and carbamoyl phosphate: step 2/3. This chain is Argininosuccinate synthase, found in Pyrococcus furiosus (strain ATCC 43587 / DSM 3638 / JCM 8422 / Vc1).